We begin with the raw amino-acid sequence, 76 residues long: Exodeoxyribonuclease 7 small subunit (76 aa).

It belongs to the XseB family. Heterooligomer composed of large and small subunits.

Its subcellular location is the cytoplasm. It carries out the reaction Exonucleolytic cleavage in either 5'- to 3'- or 3'- to 5'-direction to yield nucleoside 5'-phosphates.. Its function is as follows. Bidirectionally degrades single-stranded DNA into large acid-insoluble oligonucleotides, which are then degraded further into small acid-soluble oligonucleotides. The chain is Exodeoxyribonuclease 7 small subunit from Geotalea daltonii (strain DSM 22248 / JCM 15807 / FRC-32) (Geobacter daltonii).